The chain runs to 209 residues: LexA repressor (209 aa).

Positions 32–52 form a DNA-binding region, H-T-H motif; that stretch reads VREIGKAVDLSSTSTVHGHLA. Active-site for autocatalytic cleavage activity residues include Ser-131 and Lys-169.

The protein belongs to the peptidase S24 family. In terms of assembly, homodimer.

It carries out the reaction Hydrolysis of Ala-|-Gly bond in repressor LexA.. Functionally, represses a number of genes involved in the response to DNA damage (SOS response), including recA and lexA. In the presence of single-stranded DNA, RecA interacts with LexA causing an autocatalytic cleavage which disrupts the DNA-binding part of LexA, leading to derepression of the SOS regulon and eventually DNA repair. The chain is LexA repressor from Enterococcus faecalis (strain ATCC 700802 / V583).